We begin with the raw amino-acid sequence, 178 residues long: MAKQIYDSMAMKRALTRMTYEIIEKNKGIDDLVLVGIKTRGVYLAQRIADRLKQLENAEVPVGQLDITLYRDDRHDASLAQDPVVNEADLGFDIKDKHVILVDDVLFTGRTIRAALDALMDIGRPKKINLAVLVDRGHRELPIRADFVGKNIPTAMDEQVAVYVDEVDGKDGIELKKL.

The PRPP-binding motif lies at 99-111 (VILVDDVLFTGRT).

Belongs to the purine/pyrimidine phosphoribosyltransferase family. PyrR subfamily. As to quaternary structure, homodimer and homohexamer; in equilibrium.

The enzyme catalyses UMP + diphosphate = 5-phospho-alpha-D-ribose 1-diphosphate + uracil. Functionally, regulates transcriptional attenuation of the pyrimidine nucleotide (pyr) operon by binding in a uridine-dependent manner to specific sites on pyr mRNA. This disrupts an antiterminator hairpin in the RNA and favors formation of a downstream transcription terminator, leading to a reduced expression of downstream genes. Also displays a weak uracil phosphoribosyltransferase activity which is not physiologically significant. In Ligilactobacillus salivarius (strain UCC118) (Lactobacillus salivarius), this protein is Bifunctional protein PyrR.